Here is a 123-residue protein sequence, read N- to C-terminus: MKEVTAVVRPNKMSVTKDALDKIGYRRMTAIPVLGKGKQRGISGELNFYIQPKLLAKRYSTGMKYIPKRLLSIVVNDEDVDQVIKTIIGVNQTAQIGDGKIFVESIDEVIRIRTGEKGELALK.

Belongs to the P(II) protein family.

In terms of biological role, could be involved in the regulation of nitrogen fixation. The polypeptide is Nitrogen fixation nifHD1 region GlnB-like protein 2 (glnBB) (Methanosarcina barkeri).